Here is a 412-residue protein sequence, read N- to C-terminus: Argininosuccinate synthase (412 aa).

Alanine 10–serine 18 contacts ATP. Residue tyrosine 89 participates in L-citrulline binding. Glycine 119 provides a ligand contact to ATP. 3 residues coordinate L-aspartate: threonine 121, asparagine 125, and aspartate 126. Asparagine 125 contacts L-citrulline. Positions 129, 177, 261, and 273 each coordinate L-citrulline.

Belongs to the argininosuccinate synthase family. Type 1 subfamily. As to quaternary structure, homotetramer.

It localises to the cytoplasm. The catalysed reaction is L-citrulline + L-aspartate + ATP = 2-(N(omega)-L-arginino)succinate + AMP + diphosphate + H(+). It functions in the pathway amino-acid biosynthesis; L-arginine biosynthesis; L-arginine from L-ornithine and carbamoyl phosphate: step 2/3. In Bifidobacterium longum subsp. infantis (strain ATCC 15697 / DSM 20088 / JCM 1222 / NCTC 11817 / S12), this protein is Argininosuccinate synthase.